The chain runs to 318 residues: Probable cell division protein WhiA (318 aa).

The segment at residues 281–314 (SLKELGQMLVPPVGKSGVNHRLRKIEEISKKLKE) is a DNA-binding region (H-T-H motif).

Belongs to the WhiA family.

Its function is as follows. Involved in cell division and chromosome segregation. The polypeptide is Probable cell division protein WhiA (Thermoanaerobacter pseudethanolicus (strain ATCC 33223 / 39E) (Clostridium thermohydrosulfuricum)).